Here is a 575-residue protein sequence, read N- to C-terminus: Serine/threonine-protein kinase STY46 (575 aa).

A disordered region spans residues 116 to 140; it reads ADLDSTSNDAGHSSPTRKSIHPPPA. Residues 118–132 are compositionally biased toward polar residues; it reads LDSTSNDAGHSSPTR. In terms of domain architecture, ACT spans 178-252; sequence EITFSTEDKP…AKIELQSQSW (75 aa). One can recognise a Protein kinase domain in the interval 290–543; that stretch reads LKFGHKIASG…EIIEQLQEIA (254 aa). ATP is bound by residues 296–304 and Lys-317; that span reads IASGSYGDL. Asp-411 (proton acceptor) is an active-site residue. Position 443 is a phosphothreonine (Thr-443).

Belongs to the protein kinase superfamily. Ser/Thr protein kinase family. In terms of processing, autophosphorylated on serine and threonine residues. Autophosphorylated at Thr-443.

It localises to the cytoplasm. The protein resides in the cytosol. The enzyme catalyses L-seryl-[protein] + ATP = O-phospho-L-seryl-[protein] + ADP + H(+). The catalysed reaction is L-threonyl-[protein] + ATP = O-phospho-L-threonyl-[protein] + ADP + H(+). Its activity is regulated as follows. Activated by autophosphorylation at Thr-443. Serine/threonine protein kinase that specifically phosphorylates chloroplast precursor proteins in the cytosol within the cleavable presequences (transit peptides). May be part of a cytosolic regulatory network involved in chloroplast protein import. Does not phosphorylate mitochondrion precursor proteins. Specific for ATP and does not utilize other NTPs. Plays a role in chloroplast biogenesis and differentiation in cotyledons, possibly through phosphorylation of chloroplast preproteins. This Arabidopsis thaliana (Mouse-ear cress) protein is Serine/threonine-protein kinase STY46.